Reading from the N-terminus, the 862-residue chain is Interleukin-12 receptor subunit beta-2 (862 aa).

The signal sequence occupies residues 1–23 (MAHTFRGCSLAFMFIITWLLIKA). The Extracellular segment spans residues 24 to 622 (KIDACKRGDV…REFCLQGKAN (599 aa)). 5 N-linked (GlcNAc...) asparagine glycosylation sites follow: asparagine 48, asparagine 129, asparagine 166, asparagine 195, and asparagine 271. Fibronectin type-III domains follow at residues 126 to 221 (QPQN…FLDI), 226 to 319 (PPWD…TPEE), 320 to 419 (EPTG…LCEA), 423 to 520 (APRQ…KHKA), and 521 to 620 (PLSG…LQGK). A WSXWS motif motif is present at residues 305–309 (WSDWS). Asparagine 347, asparagine 376, and asparagine 480 each carry an N-linked (GlcNAc...) asparagine glycan. The helical transmembrane segment at 623–643 (WMAFVAPSICIAIIMVGIFST) threads the bilayer. Topologically, residues 644 to 862 (HYFQQKVFVL…LKMRCDSLML (219 aa)) are cytoplasmic. The short motif at 662-670 (CSREIPDPA) is the Box 1 motif element. The interval 725 to 755 (NWPQREKGIQGHQASEKDMMHSASSPPPPRA) is disordered. A compositionally biased stretch (basic and acidic residues) spans 728–744 (QREKGIQGHQASEKDMM). The tract at residues 796-801 (THDGYL) is required for STAT4 binding. Tyrosine 800 carries the post-translational modification Phosphotyrosine.

This sequence belongs to the type I cytokine receptor family. Type 2 subfamily. Heterodimer/heterooligomer; disulfide-linked. The functional high affinity IL12 receptor is composed of I12RB1 and IL12RB2. Il12RB2 binds JAK2 (via its N-terminal) through a membrane-proximal region of the cytoplasmic domain. Interaction, in vitro and in vivo, with SOCS3 (via its SH2 domain) inhibits the STAT4-mediated activation. Binds STAT4 through a membrane-distal C-terminal region. In terms of processing, on IL12 binding, phosphorylated on C-terminal tyrosine residues by JAK2. Phosphorylation on Tyr-800 is required for STAT4 binding and activation, and for SOCS3 binding. In terms of tissue distribution, isoform 2 is expressed at similar levels in both naive and activated T-cells.

It is found in the membrane. Its function is as follows. Receptor for interleukin-12. This subunit is the signaling component coupling to the JAK2/STAT4 pathway. Promotes the proliferation of T-cells as well as NK cells. Induces the promotion of T-cells towards the Th1 phenotype by strongly enhancing IFN-gamma production. In Homo sapiens (Human), this protein is Interleukin-12 receptor subunit beta-2 (IL12RB2).